Consider the following 920-residue polypeptide: Whirlin (920 aa).

The PDZ 1 domain occupies 141–224; that stretch reads LVSLRRAKAH…LVLSVYSAGR (84 aa). The disordered stretch occupies residues 241-262; it reads QGRSTSPPSSLPHGSTLRQHED. Polar residues predominate over residues 242–257; sequence GRSTSPPSSLPHGSTL. A PDZ 2 domain is found at 278 to 360; that stretch reads KVNLVLGDGR…LILTVKDVGR (83 aa). Disordered stretches follow at residues 502-536, 561-603, 630-730, and 752-828; these read MKARQPPGPGVGDTYSMVSYSDTGSSTGSHGTSTT, CETT…QGHD, FSAP…AMGA, and RALP…PTST. The span at 520–536 shows a compositional bias: low complexity; it reads SYSDTGSSTGSHGTSTT. Residues 561–570 show a composition bias toward polar residues; the sequence is CETTQGSTNA. 2 stretches are compositionally biased toward pro residues: residues 589 to 598 and 636 to 651; these read IKPPPPPPPL and RSPPPPPGIAPTPTPG. A compositionally biased stretch (polar residues) spans 655–674; it reads ARDSPSSPIYASISHANPSS. At S698 the chain carries Phosphoserine. Composition is skewed to polar residues over residues 756–775 and 785–800; these read QTRTASTLSQLSDSGQTLSE and EASTSGRGRQTANTKN. Residues 802–813 show a composition bias toward basic and acidic residues; sequence NGKELPQTERTT. Residues 829-912 form the PDZ 3 domain; it reads LIRVRKSAAT…TKERDYIDFL (84 aa).

In terms of assembly, forms homooligomers. Interacts (via C-terminal PDZ domain) with MYO15A; this interaction is necessary for localization of WHRN to stereocilia tips. Interacts (via C-terminal PDZ domain) with MPP1/p55. Interacts with LRRC4C/NGL1. Interacts with MYO7A. Interacts with RPGR. Interacts with EPS8. Interacts with CASK. Interacts with CIB2. Component of USH2 complex, composed of ADGRV1, PDZD7, USH2A and WHRN. Interacts (via PDZ domains) with PDZD7; the interaction is direct. Interacts (via N-terminal PDZ domain) with USH2A (via cytoplasmic region). Interacts with ADGRV1/MASS1 (via cytoplasmic region). In terms of tissue distribution, ubiquitous. Highly expressed in heart, spleen, lung and liver. Highly expressed in brain, in the olfactory bulb, thalamus, layers III-V of the cerebral cortex and the molecular layer of cerebellum. Detected in soma and dendrites of thalamic neurons, and in cerebrum in cell bodies and apical dendrites of pyramidal neurons. Expressed in retina and inner ear.

It is found in the cytoplasm. The protein resides in the cell projection. It localises to the stereocilium. Its subcellular location is the growth cone. The protein localises to the synapse. In terms of biological role, involved in hearing and vision as member of the USH2 complex. Necessary for elongation and maintenance of inner and outer hair cell stereocilia in the organ of Corti in the inner ear. Involved in the maintenance of the hair bundle ankle region, which connects stereocilia in cochlear hair cells of the inner ear. In retina photoreceptors, required for the maintenance of periciliary membrane complex that seems to play a role in regulating intracellular protein transport. This Rattus norvegicus (Rat) protein is Whirlin.